Here is a 70-residue protein sequence, read N- to C-terminus: PPF2L antigen (70 aa).

This is PPF2L antigen from Plasmodium falciparum (isolate Palo Alto / Uganda).